Reading from the N-terminus, the 419-residue chain is Variant surface glycoprotein YnAT 1.1 (419 aa).

A signal peptide spans 1–28 (MKRVLSNVLKAWIFTIVAFHNFSTSVTA). N82 and N358 each carry an N-linked (GlcNAc...) asparagine glycan. The segment at 369 to 405 (ESSRPPSTDANTSQKGPLQRPEKSGESSHLPSGSSHG) is disordered. The span at 372-384 (RPPSTDANTSQKG) shows a compositional bias: polar residues. N379 carries N-linked (GlcNAc...) (high mannose) asparagine glycosylation. The span at 395–405 (SSHLPSGSSHG) shows a compositional bias: low complexity. S400 carries GPI-anchor amidated serine lipidation. Residues 401 to 419 (GSSHGTKAIRSILHVALLM) constitute a propeptide, removed in mature form.

It localises to the cell membrane. VSG forms a coat on the surface of the parasite. The trypanosome evades the immune response of the host by expressing a series of antigenically distinct VSGs from an estimated 1000 VSG genes. The polypeptide is Variant surface glycoprotein YnAT 1.1 (Trypanosoma congolense).